A 427-amino-acid polypeptide reads, in one-letter code: 3-phosphoshikimate 1-carboxyvinyltransferase (427 aa).

3 residues coordinate 3-phosphoshikimate: K22, S23, and R27. K22 contributes to the phosphoenolpyruvate binding site. 2 residues coordinate phosphoenolpyruvate: G96 and R124. 3-phosphoshikimate-binding residues include S169, S170, Q171, S197, D313, N336, and K340. Q171 lines the phosphoenolpyruvate pocket. The active-site Proton acceptor is the D313. R344, R386, and K411 together coordinate phosphoenolpyruvate.

It belongs to the EPSP synthase family. In terms of assembly, monomer.

The protein localises to the cytoplasm. It catalyses the reaction 3-phosphoshikimate + phosphoenolpyruvate = 5-O-(1-carboxyvinyl)-3-phosphoshikimate + phosphate. It functions in the pathway metabolic intermediate biosynthesis; chorismate biosynthesis; chorismate from D-erythrose 4-phosphate and phosphoenolpyruvate: step 6/7. In terms of biological role, catalyzes the transfer of the enolpyruvyl moiety of phosphoenolpyruvate (PEP) to the 5-hydroxyl of shikimate-3-phosphate (S3P) to produce enolpyruvyl shikimate-3-phosphate and inorganic phosphate. The chain is 3-phosphoshikimate 1-carboxyvinyltransferase from Salmonella choleraesuis (strain SC-B67).